A 164-amino-acid polypeptide reads, in one-letter code: Protein SprT (164 aa).

The SprT-like domain occupies 14 to 156; it reads QQAETFFKRP…LCKRCRETLV (143 aa). H69 provides a ligand contact to Zn(2+). E70 is an active-site residue. Residue H73 participates in Zn(2+) binding.

The protein belongs to the SprT family. It depends on Zn(2+) as a cofactor.

Its subcellular location is the cytoplasm. The protein is Protein SprT of Pseudomonas putida (strain W619).